Consider the following 307-residue polypeptide: MELSQYHQILSLLNNFSNKDKISVIECLDSISELRKQMSVLFNKLLKVALKNRNLPMVKFVCDNLEKIDNKAITLAAKYNCLEILKYLHEKGLDTTNHNYSALSWAARNNDFKMVEYLQHQGSDIRANDDEALRWAALSGCLEMVEYLQTQGCDVRNRNDFAIKYAARNGHFKLVRYLHSQGSDIRTDDDYALRWAARNGHLEIVKYLHSKGCNIHAYGDSAIKWASMGGYLEIVEYLHGVGCDIRIDNDYPIRWAASNGHLEVVEYLFSQGCDIGADNNYALMWAKKNGHDDVVEYIVLLKLLKLY.

9 ANK repeats span residues Leu41–Lys67, Ile68–Asn97, His98–Ala127, Asp129–Asn157, Arg158–Thr187, Asp188–Ala217, Gly219–Ile247, Asp248–Ala277, and Asn279–Tyr307.

The polypeptide is Putative ankyrin repeat protein L59 (Acanthamoeba polyphaga (Amoeba)).